The following is a 283-amino-acid chain: Daunorubicin resistance ABC transporter permease protein DrrB1 (283 aa).

The ABC transmembrane type-2 domain occupies 53–280; that stretch reads VQLIDIVLMP…PLTMRLYRNK (228 aa). 6 helical membrane-spanning segments follow: residues 58 to 78, 85 to 105, 150 to 170, 171 to 191, 198 to 218, and 252 to 272; these read IVLMPLIFLLMFTYLFGGAFA, LQFYLPGVTVQAVVMMTVYTG, VFLGLLLGFRADGGFLGVVGA, MLVLIVFGFSVSWIFAALGVV, VSGTSMIVLYPLLFMSNIFVM, and FWDVGLVLCVSAGLVAVFAPL.

The protein belongs to the ABC-2 integral membrane protein family. As to quaternary structure, the complex is probably composed of two ATP-binding proteins (DrrA1) and two transmembrane proteins (DrrB1).

It is found in the cell membrane. Part of the ABC transporter complex DrrA1B1 involved in daunorubicin efflux. Responsible for the translocation of the substrate across the membrane. Confers self-resistance to daunorubicin, an antibiotic produced by S.coeruleorubidus. The sequence is that of Daunorubicin resistance ABC transporter permease protein DrrB1 from Streptomyces coeruleorubidus.